The following is a 209-amino-acid chain: Large ribosomal subunit protein uL3 (209 aa).

Belongs to the universal ribosomal protein uL3 family. In terms of assembly, part of the 50S ribosomal subunit. Forms a cluster with proteins L14 and L19.

One of the primary rRNA binding proteins, it binds directly near the 3'-end of the 23S rRNA, where it nucleates assembly of the 50S subunit. The chain is Large ribosomal subunit protein uL3 from Nitratidesulfovibrio vulgaris (strain ATCC 29579 / DSM 644 / CCUG 34227 / NCIMB 8303 / VKM B-1760 / Hildenborough) (Desulfovibrio vulgaris).